The sequence spans 891 residues: Valine--tRNA ligase (891 aa).

The short motif at 43–53 (PFTSGTLHLGH) is the 'HIGH' region element. The 'KMSKS' region motif lies at 536–540 (KMSKS). Lysine 539 lines the ATP pocket.

Belongs to the class-I aminoacyl-tRNA synthetase family. ValS type 2 subfamily.

Its subcellular location is the cytoplasm. The catalysed reaction is tRNA(Val) + L-valine + ATP = L-valyl-tRNA(Val) + AMP + diphosphate. Functionally, catalyzes the attachment of valine to tRNA(Val). As ValRS can inadvertently accommodate and process structurally similar amino acids such as threonine, to avoid such errors, it has a 'posttransfer' editing activity that hydrolyzes mischarged Thr-tRNA(Val) in a tRNA-dependent manner. This chain is Valine--tRNA ligase, found in Pyrococcus abyssi (strain GE5 / Orsay).